Consider the following 1373-residue polypeptide: DNA-directed RNA polymerase subunit beta (1373 aa).

The protein belongs to the RNA polymerase beta chain family. In terms of assembly, the RNAP catalytic core consists of 2 alpha, 1 beta, 1 beta' and 1 omega subunit. When a sigma factor is associated with the core the holoenzyme is formed, which can initiate transcription.

The catalysed reaction is RNA(n) + a ribonucleoside 5'-triphosphate = RNA(n+1) + diphosphate. In terms of biological role, DNA-dependent RNA polymerase catalyzes the transcription of DNA into RNA using the four ribonucleoside triphosphates as substrates. The sequence is that of DNA-directed RNA polymerase subunit beta from Rickettsia conorii (strain ATCC VR-613 / Malish 7).